The following is a 450-amino-acid chain: UDP-N-acetylmuramoylalanine--D-glutamate ligase (450 aa).

Residue 119 to 125 coordinates ATP; that stretch reads GSNGKTT.

This sequence belongs to the MurCDEF family.

It is found in the cytoplasm. It carries out the reaction UDP-N-acetyl-alpha-D-muramoyl-L-alanine + D-glutamate + ATP = UDP-N-acetyl-alpha-D-muramoyl-L-alanyl-D-glutamate + ADP + phosphate + H(+). It participates in cell wall biogenesis; peptidoglycan biosynthesis. In terms of biological role, cell wall formation. Catalyzes the addition of glutamate to the nucleotide precursor UDP-N-acetylmuramoyl-L-alanine (UMA). The sequence is that of UDP-N-acetylmuramoylalanine--D-glutamate ligase from Streptococcus sanguinis (strain SK36).